The following is a 270-amino-acid chain: F-actin-capping protein subunit beta (270 aa).

The span at 245-258 (QTRSQKSTTDSQEQ) shows a compositional bias: polar residues. Positions 245–270 (QTRSQKSTTDSQEQQQKEVIKGLQNL) are disordered.

Belongs to the F-actin-capping protein beta subunit family. As to quaternary structure, component of the F-actin capping complex, composed of a heterodimer of an alpha and a beta subunit.

It is found in the cytoplasm. It localises to the cytoskeleton. The protein resides in the actin patch. In terms of biological role, F-actin-capping proteins bind in a Ca(2+)-independent manner to the fast growing ends of actin filaments (barbed end) thereby blocking the exchange of subunits at these ends. Unlike other capping proteins (such as gelsolin and severin), these proteins do not sever actin filaments. The protein is F-actin-capping protein subunit beta (CAP2) of Candida glabrata (strain ATCC 2001 / BCRC 20586 / JCM 3761 / NBRC 0622 / NRRL Y-65 / CBS 138) (Yeast).